Here is a 667-residue protein sequence, read N- to C-terminus: Flavin-dependent halogenase malA (667 aa).

Positions 48, 70, 79, and 82 each coordinate FAD. The active site involves Lys108. Residues Arg144, Val168, Asp399, and Ile412 each contribute to the FAD site. Residue Glu494 participates in substrate binding. Zn(2+) is bound by residues Cys597, Cys600, Cys613, and Cys616. The tract at residues 621-646 is flexible region; the sequence is TEPQTAVTFDPPLTAEEEALLYAAWN.

The protein belongs to the flavin-dependent halogenase family. Requires Zn(2+) as cofactor.

The enzyme catalyses (+)-premalbrancheamide + 2 FAD + 2 chloride + 4 H(+) = (+)-malbrancheamide + 2 FADH2. The catalysed reaction is (+)-premalbrancheamide + FAD + chloride + 2 H(+) = (+)-malbrancheamide B + FADH2. It carries out the reaction (+)-premalbrancheamide + FAD + chloride + 2 H(+) = (+)-isomalbrancheamide B + FADH2. It catalyses the reaction (+)-malbrancheamide B + FAD + chloride + 2 H(+) = (+)-malbrancheamide + FADH2. The enzyme catalyses (+)-isomalbrancheamide B + FAD + chloride + 2 H(+) = (+)-malbrancheamide + FADH2. The catalysed reaction is (+)-premalbrancheamide + bromide + FAD + 2 H(+) = (+)-malbrancheamide C + FADH2. It carries out the reaction (+)-premalbrancheamide + bromide + FAD + 2 H(+) = (+)-isomalbrancheamide C + FADH2. It catalyses the reaction (+)-malbrancheamide B + bromide + FAD + 2 H(+) = (+)-malbrancheamide D + FADH2. The enzyme catalyses (+)-isomalbrancheamide B + bromide + FAD + 2 H(+) = (+)-isomalbrancheamide D + FADH2. The protein operates within alkaloid biosynthesis. Flavin-dependent halogenase; part of the gene cluster that mediates the biosynthesis of malbrancheamide, a dichlorinated fungal indole alkaloid that belongs to a family of natural products containing a characteristic bicyclo[2.2.2]diazaoctane core. The first step of malbrancheamide biosynthesis involves coupling of L-proline and L-tryptophan by malG, a bimodular NRPS, to produce L-Pro-L-Trp aldehyde through reductive offloading. This compound undergoes spontaneous cyclization and dehydration to give a dienamine which is reverse prenylated at C-2 by malE. The other prenyltransferase present in the cluster, malB, displays modest activity, suggesting that may be a redundant gene in the pathway. Subsequently, a [4+2] Diels-Alder cyclo-addition catalyzed by the bifunctional enzyme malC forms the characteristic bicyclo[2.2.2]diazaoctane ring of premalbrancheamid. Finally, the flavin-dependent halogenase malA catalyzes the iterative dichlorination of the indole ring of premalbrancheamide to yield C-9 monochlorinated malbrancheamide B, C-8 monochlorinated isomalbrancheamide B, and dichlorinated malbrancheamide. MalA is also able to brominate premalbrancheamide at C-9 to yield malbrancheamide C, and, to a lesser extend, at C-8 to yield isomalbrancheamide C. Finally, malA can brominate C-9 monochlorinated malbrancheamide B at C-8 to yield malbrancheamide D, or C-8 monochlorinated isomalbrancheamide B at C-9 to produce isomalbrancheamide D. The polypeptide is Flavin-dependent halogenase malA (Malbranchea aurantiaca).